Reading from the N-terminus, the 473-residue chain is Photosystem II CP43 reaction center protein (473 aa).

A propeptide spanning residues 1–14 (MKTLYSLRRSYPVE) is cleaved from the precursor. The residue at position 15 (threonine 15) is an N-acetylthreonine. Threonine 15 is subject to Phosphothreonine. The next 5 membrane-spanning stretches (helical) occupy residues 69-93 (LFEV…PHLA), 134-155 (LIGP…KDRN), 178-200 (KALY…RKIT), 255-275 (KPFA…LSYS), and 291-312 (WFNN…ASQA). Residue glutamate 367 coordinates [CaMn4O5] cluster. A helical membrane pass occupies residues 447-471 (RARAAAAGFEKGIDRDFEPVLSMTP).

Belongs to the PsbB/PsbC family. PsbC subfamily. As to quaternary structure, PSII is composed of 1 copy each of membrane proteins PsbA, PsbB, PsbC, PsbD, PsbE, PsbF, PsbH, PsbI, PsbJ, PsbK, PsbL, PsbM, PsbT, PsbX, PsbY, PsbZ, Psb30/Ycf12, at least 3 peripheral proteins of the oxygen-evolving complex and a large number of cofactors. It forms dimeric complexes. The cofactor is Binds multiple chlorophylls and provides some of the ligands for the Ca-4Mn-5O cluster of the oxygen-evolving complex. It may also provide a ligand for a Cl- that is required for oxygen evolution. PSII binds additional chlorophylls, carotenoids and specific lipids..

It localises to the plastid. The protein localises to the chloroplast thylakoid membrane. In terms of biological role, one of the components of the core complex of photosystem II (PSII). It binds chlorophyll and helps catalyze the primary light-induced photochemical processes of PSII. PSII is a light-driven water:plastoquinone oxidoreductase, using light energy to abstract electrons from H(2)O, generating O(2) and a proton gradient subsequently used for ATP formation. In Pinus thunbergii (Japanese black pine), this protein is Photosystem II CP43 reaction center protein.